Here is a 1041-residue protein sequence, read N- to C-terminus: Toll-like receptor 8 (1041 aa).

The signal sequence occupies residues 1–26; that stretch reads MENMFLQSSMLTCIFLLISGSCELCA. Residues 27–827 are Extracellular-facing; sequence EENFSRSYPC…ELTTCVSDVT (801 aa). Asparagine 29, asparagine 42, asparagine 80, asparagine 88, and asparagine 115 each carry an N-linked (GlcNAc...) asparagine glycan. Cysteine 36 and cysteine 49 are oxidised to a cystine. LRR repeat units lie at residues 126–147, 148–168, 171–193, 202–223, 224–244, and 247–268; these read NLRE…LPES, LTEL…GISR, NLKN…TNIE, NLEL…LPSS, LRKL…DFKG, and NLTL…FPCV. N-linked (GlcNAc...) asparagine glycosylation is present at asparagine 160. Cysteine 181 and cysteine 187 are joined by a disulfide. A glycan (N-linked (GlcNAc...) asparagine) is linked at asparagine 247. Intrachain disulfides connect cysteine 257-cysteine 270 and cysteine 260-cysteine 267. Asparagine 285 and asparagine 293 each carry an N-linked (GlcNAc...) asparagine glycan. LRR repeat units lie at residues 288–309, 312–334, and 338–360; these read QLRY…WFKN, HLKV…AFLT, and RLEI…INIS. 2 N-linked (GlcNAc...) asparagine glycosylation sites follow: asparagine 358 and asparagine 362. LRR repeat units lie at residues 368–389, 395–416, and 419–440; these read SLRA…DFQP, NLST…LFQN, and NLEI…TRQS. N-linked (GlcNAc...) asparagine glycosylation is found at asparagine 395 and asparagine 416. An N-linked (GlcNAc...) asparagine glycan is attached at asparagine 443. A disulfide bridge links cysteine 479 with cysteine 509. LRR repeat units lie at residues 482-503, 506-527, 531-551, and 555-577; these read YGKA…QFEN, DIAC…TEFS, HVKY…SALT, and DLEV…THHL. Asparagine 511 and asparagine 546 each carry an N-linked (GlcNAc...) asparagine glycan. N-linked (GlcNAc...) asparagine glycans are attached at residues asparagine 582 and asparagine 590. LRR repeat units lie at residues 585 to 606, 609 to 630, 640 to 661, 665 to 685, 689 to 710, 713 to 734, and 737 to 758; these read NLKV…YNLE, SLVE…DDNR, NLTR…AFLN, SLTE…TLLQ, RLEL…LSDF, SLRT…FLSE, and SLKH…ALET. N-linked (GlcNAc...) asparagine glycans are attached at residues asparagine 640 and asparagine 680. The N-linked (GlcNAc...) asparagine glycan is linked to asparagine 752. Positions 772-824 constitute an LRRCT domain; that stretch reads NPFECTCDIGDFRRWMDEHLNVKIPRLVDVICASPGDQRGKSIVSLELTTCVS. A disulfide bridge connects residues cysteine 776 and cysteine 803. A helical transmembrane segment spans residues 828–848; the sequence is AVILFFFTFFITTMVMLAALA. Residues 849–1041 are Cytoplasmic-facing; that stretch reads HHLFYWDVWF…NMYVDSIKQY (193 aa). A TIR domain is found at 878–1022; sequence TFYDAYISYD…LFWQTLRNVV (145 aa).

This sequence belongs to the Toll-like receptor family. In terms of assembly, homodimer. Interacts with MYD88 via their respective TIR domains. Interacts with UNC93B1. Interacts with BTK. Interacts with SMPDL3B. Post-translationally, ubiquitinated by RNF216; leading to degradation by the proteasome. Proteolytic processing occurs in monocytes and monocyte-derived macrophages by both furin-like proprotein convertase and cathepsins. The cleavage is necessary for dimer formation and subsequent activation. As to expression, expressed in myeloid dendritic cells, monocytes, and monocyte-derived dendritic cells.

It localises to the endosome membrane. Its activity is regulated as follows. Activated by RNAs having enough uridines. Endosomal receptor that plays a key role in innate and adaptive immunity. Controls host immune response against pathogens through recognition of RNA degradation products specific to microorganisms that are initially processed by RNASET2. Recognizes GU-rich single-stranded RNA (GU-rich RNA) derived from SARS-CoV-2, SARS-CoV-1 and HIV-1 viruses. Upon binding to agonists, undergoes dimerization that brings TIR domains from the two molecules into direct contact, leading to the recruitment of TIR-containing downstream adapter MYD88 through homotypic interaction. In turn, the Myddosome signaling complex is formed involving IRAK4, IRAK1, TRAF6, TRAF3 leading to activation of downstream transcription factors NF-kappa-B and IRF7 to induce pro-inflammatory cytokines and interferons, respectively. In Homo sapiens (Human), this protein is Toll-like receptor 8.